The primary structure comprises 179 residues: Translation initiation factor IF-3 (179 aa).

It belongs to the IF-3 family. In terms of assembly, monomer.

The protein localises to the cytoplasm. Its function is as follows. IF-3 binds to the 30S ribosomal subunit and shifts the equilibrium between 70S ribosomes and their 50S and 30S subunits in favor of the free subunits, thus enhancing the availability of 30S subunits on which protein synthesis initiation begins. This chain is Translation initiation factor IF-3, found in Proteus hauseri.